A 410-amino-acid chain; its full sequence is Formyl-CoA:oxalate CoA-transferase (410 aa).

CoA-binding positions include 18 to 19, 72 to 75, 96 to 98, R104, and 136 to 139; these read QS, LNTK, NFG, and KAYE. Residue D168 is the Nucleophile of the active site. The disordered stretch occupies residues 221–245; it reads PLAEYPNEDFGDEVPRSGNASGGGQ. 243–245 contacts substrate; the sequence is GGQ.

Belongs to the CoA-transferase III family. Frc subfamily. In terms of assembly, homodimer.

It carries out the reaction formyl-CoA + oxalate = oxalyl-CoA + formate. Its pathway is metabolic intermediate degradation; oxalate degradation; CO(2) and formate from oxalate: step 1/2. Its function is as follows. Involved in the catabolism of oxalate and in the adapatation to low pH via the induction of the oxalate-dependent acid tolerance response (ATR). Catalyzes the transfer of the CoA moiety from formyl-CoA to oxalate. The protein is Formyl-CoA:oxalate CoA-transferase of Streptomyces coelicolor (strain ATCC BAA-471 / A3(2) / M145).